Reading from the N-terminus, the 447-residue chain is Protein disulfide-isomerase like 2-2 (447 aa).

A signal peptide spans 1 to 26 (MERKMYKSTVFPICCLLFALFDRGNA). Thioredoxin domains follow at residues 27–139 (LYGS…QIKA) and 161–275 (KKKS…QLES). Active-site nucleophile residues include Cys-62 and Cys-65. Cysteines 62 and 65 form a disulfide. The tract at residues 146–170 (DGKTSGTKNGGGSSEKKKSEPSASV) is disordered. The N-linked (GlcNAc...) asparagine glycan is linked to Asn-173. Residues Cys-197 and Cys-200 each act as nucleophile in the active site. An intrachain disulfide couples Cys-197 to Cys-200. Residues 444–447 (KDDL) carry the Prevents secretion from ER motif.

Belongs to the protein disulfide isomerase family. As to expression, widely expressed.

Its subcellular location is the endoplasmic reticulum lumen. The catalysed reaction is Catalyzes the rearrangement of -S-S- bonds in proteins.. In terms of biological role, acts as a protein-folding catalyst that interacts with nascent polypeptides to catalyze the formation, isomerization, and reduction or oxidation of disulfide bonds. The chain is Protein disulfide-isomerase like 2-2 (PDIL2-2) from Arabidopsis thaliana (Mouse-ear cress).